Consider the following 132-residue polypeptide: Phosphoribosyl-AMP cyclohydrolase (132 aa).

Asp-79 contacts Mg(2+). A Zn(2+)-binding site is contributed by Cys-80. Asp-81 and Asp-83 together coordinate Mg(2+). Zn(2+) is bound by residues Cys-100 and Cys-107.

The protein belongs to the PRA-CH family. Homodimer. The cofactor is Mg(2+). Requires Zn(2+) as cofactor.

Its subcellular location is the cytoplasm. It carries out the reaction 1-(5-phospho-beta-D-ribosyl)-5'-AMP + H2O = 1-(5-phospho-beta-D-ribosyl)-5-[(5-phospho-beta-D-ribosylamino)methylideneamino]imidazole-4-carboxamide. It participates in amino-acid biosynthesis; L-histidine biosynthesis; L-histidine from 5-phospho-alpha-D-ribose 1-diphosphate: step 3/9. Catalyzes the hydrolysis of the adenine ring of phosphoribosyl-AMP. The chain is Phosphoribosyl-AMP cyclohydrolase from Acidovorax ebreus (strain TPSY) (Diaphorobacter sp. (strain TPSY)).